The sequence spans 556 residues: Testis-specific protein 10-interacting protein (556 aa).

The span at Met-1 to Gly-20 shows a compositional bias: polar residues. 2 disordered regions span residues Met-1–Lys-102 and Cys-180–Asp-320. Over residues Lys-75 to Lys-85 the composition is skewed to basic residues. Acidic residues-rich tracts occupy residues Glu-213–Glu-225 and Leu-246–Asp-260. Residues Pro-266–Arg-278 show a composition bias toward basic residues. Residues Glu-304–Asp-320 are compositionally biased toward basic and acidic residues. Residues Leu-387–Gln-463 adopt a coiled-coil conformation. Positions Ala-503–Pro-556 are disordered. A compositionally biased stretch (polar residues) spans Pro-527–Asp-543.

This is Testis-specific protein 10-interacting protein (TSGA10IP) from Bos taurus (Bovine).